Consider the following 124-residue polypeptide: Cytochrome b5-like protein (124 aa).

Residues 5 to 22 (YLLILIIIYVIKIICRYF) form a helical membrane-spanning segment. A Cytochrome b5 heme-binding domain is found at 49–124 (NQINQVNQVN…ILSKYKITEK (76 aa)). Heme is bound by residues His84 and His108.

It belongs to the cytochrome b5 family.

The protein localises to the membrane. Its function is as follows. Membrane bound hemoprotein which function as an electron carrier for several membrane bound oxygenases. This is Cytochrome b5-like protein from Acanthamoeba polyphaga (Amoeba).